The chain runs to 712 residues: Frizzled-6 (712 aa).

Residues 1 to 18 (MEMFTFLLTCVFLPFVRG) form the signal peptide. In terms of domain architecture, FZ spans 19–132 (HSLFTCEPIT…CDRLQYCDET (114 aa)). Topologically, residues 19–201 (HSLFTCEPIT…SDELEFAKSF (183 aa)) are extracellular. 5 cysteine pairs are disulfide-bonded: Cys24/Cys85, Cys32/Cys78, Cys69/Cys106, Cys95/Cys129, and Cys99/Cys123. Residue Asn38 is glycosylated (N-linked (GlcNAc...) asparagine). A helical transmembrane segment spans residues 202–222 (IGIVSIFCLCATLFTFLTFLI). Residues 223–233 (DVKRFRYPERP) lie on the Cytoplasmic side of the membrane. The chain crosses the membrane as a helical span at residues 234–254 (IIYYSVCYSIVSLMYFIGFLL). At 255–284 (GDRTACNKADEKLELGDTVVLGSQNKACTV) the chain is on the extracellular side. A helical membrane pass occupies residues 285–305 (LFMFLYFFTMAGTVWWVILTI). Residues 306–324 (TWFLAAGRKWSCEAIEQKA) are Cytoplasmic-facing. The chain crosses the membrane as a helical span at residues 325-345 (VWFHAVAWGIPGFLTVMLLAM). Topologically, residues 346–370 (NKVEGDNISGVCFVGLYDLDASRYF) are extracellular. Residue Asn352 is glycosylated (N-linked (GlcNAc...) asparagine). Residues 371–391 (VLLPLCLCVFVGLSLLLAGII) form a helical membrane-spanning segment. At 392 to 416 (SLNHVRQVIQHDGRNQEKLKKFMIR) the chain is on the cytoplasmic side. The chain crosses the membrane as a helical span at residues 417-437 (IGVFSGLYLVPLVTLLGCYVY). The Extracellular portion of the chain corresponds to 438–473 (EQVNRITWEITWVSDHCRQYHIPCPYQAKTETRPEL). Residues 474 to 494 (ALFMIKYLMTLIVGISAVFWV) form a helical membrane-spanning segment. Residues 495 to 712 (GSKKTCTEWA…EHGTGSHSDT (218 aa)) lie on the Cytoplasmic side of the membrane. The Lys-Thr-X-X-X-Trp motif, mediates interaction with the PDZ domain of Dvl family members motif lies at 498-503 (KTCTEW). The segment at 588–712 (EIQTSPETSV…EHGTGSHSDT (125 aa)) is disordered. Composition is skewed to basic and acidic residues over residues 628–637 (LCEEQADRKG) and 652–664 (TRSEGRVTPKSDV). Over residues 668–693 (GPMQSSSLQVPGSSEPGSLKGSTSLL) the composition is skewed to polar residues. Residues 700–712 (GRKEHGTGSHSDT) are compositionally biased toward basic and acidic residues.

It belongs to the G-protein coupled receptor Fz/Smo family. Interacts with LMBR1L. In terms of processing, ubiquitinated by ZNRF3, leading to its degradation by the proteasome.

It localises to the membrane. The protein resides in the cell membrane. Its subcellular location is the cell surface. It is found in the apical cell membrane. The protein localises to the cytoplasmic vesicle membrane. It localises to the endoplasmic reticulum membrane. In terms of biological role, receptor for Wnt proteins. Most of frizzled receptors are coupled to the beta-catenin canonical signaling pathway, which leads to the activation of disheveled proteins, inhibition of GSK-3 kinase, nuclear accumulation of beta-catenin and activation of Wnt target genes. A second signaling pathway involving PKC and calcium fluxes has been seen for some family members, but it is not yet clear if it represents a distinct pathway or if it can be integrated in the canonical pathway, as PKC seems to be required for Wnt-mediated inactivation of GSK-3 kinase. Both pathways seem to involve interactions with G-proteins. Activation by Wnt5A stimulates PKC activity via a G-protein-dependent mechanism. Involved in transduction and intercellular transmission of polarity information during tissue morphogenesis and/or in differentiated tissues. Together with FZD3, is involved in the neural tube closure and plays a role in the regulation of the establishment of planar cell polarity (PCP), particularly in the orientation of asymmetric bundles of stereocilia on the apical faces of a subset of auditory and vestibular sensory cells located in the inner ear. The sequence is that of Frizzled-6 (FZD6) from Canis lupus familiaris (Dog).